A 509-amino-acid polypeptide reads, in one-letter code: Probable cytochrome P450 513A1 (509 aa).

A helical membrane pass occupies residues 2 to 19 (NYLVGLVLIFTIFYFFLQ). Position 454 (Cys-454) interacts with heme.

It belongs to the cytochrome P450 family. Requires heme as cofactor.

It is found in the membrane. The sequence is that of Probable cytochrome P450 513A1 (cyp513A1) from Dictyostelium discoideum (Social amoeba).